Here is a 411-residue protein sequence, read N- to C-terminus: Peptidase T (411 aa).

Zn(2+) is bound at residue His79. Asp81 is an active-site residue. Residue Asp142 coordinates Zn(2+). The active-site Proton acceptor is the Glu176. Zn(2+) is bound by residues Glu177, Asp199, and His381.

Belongs to the peptidase M20B family. It depends on Zn(2+) as a cofactor.

The protein localises to the cytoplasm. It carries out the reaction Release of the N-terminal residue from a tripeptide.. In terms of biological role, cleaves the N-terminal amino acid of tripeptides. The chain is Peptidase T from Geobacillus thermodenitrificans (strain NG80-2).